Here is a 545-residue protein sequence, read N- to C-terminus: Chaperonin GroEL (545 aa).

ATP-binding positions include 30 to 33 (TLGP), lysine 51, 87 to 91 (DGTTT), glycine 415, 479 to 481 (NAA), and aspartate 495. Positions 526 to 545 (KDDAPAPAMPDMGGMGGMGM) are disordered.

This sequence belongs to the chaperonin (HSP60) family. Forms a cylinder of 14 subunits composed of two heptameric rings stacked back-to-back. Interacts with the co-chaperonin GroES.

Its subcellular location is the cytoplasm. The enzyme catalyses ATP + H2O + a folded polypeptide = ADP + phosphate + an unfolded polypeptide.. In terms of biological role, together with its co-chaperonin GroES, plays an essential role in assisting protein folding. The GroEL-GroES system forms a nano-cage that allows encapsulation of the non-native substrate proteins and provides a physical environment optimized to promote and accelerate protein folding. This chain is Chaperonin GroEL, found in Paracidovorax citrulli (strain AAC00-1) (Acidovorax citrulli).